We begin with the raw amino-acid sequence, 1481 residues long: Nucleoporin NUP159 (1481 aa).

2 WD repeats span residues 106–146 (PLPL…QGNT) and 201–241 (TLRS…AHIP). 6 PXFG repeats span residues 483–486 (PTFG), 493–496 (PAFG), 519–522 (PTFG), 524–527 (PSFG), 532–535 (PAFG), and 559–562 (PAFG). Positions 607 to 616 (GSSIFSSKPG) are enriched in low complexity. 2 disordered regions span residues 607–647 (GSSI…PAFG) and 662–991 (TAAH…SLGG). The stretch at 644–647 (PAFG) is one PXFG 7 repeat. Over residues 663-677 (AAHDIEKPKEGESKS) the composition is skewed to basic and acidic residues. 2 stretches are compositionally biased toward polar residues: residues 724-734 (FESTTPTTTPA) and 741-763 (KTTT…SSMP). Positions 773 to 794 (SAEKPKSIFDTLKPKEESKENL) are enriched in basic and acidic residues. Low complexity predominate over residues 814–833 (PGSSSSESAESSPGAAAKAA). 2 stretches are compositionally biased toward basic and acidic residues: residues 837-850 (GNDE…ELAP) and 862-877 (VKAK…KAEE). Residues 903–955 (ASEEEQGQAEEEEAESGEEEEEEEEEGEGEEEEEEEEEEEEEEEEGEEGEEQS) show a composition bias toward acidic residues. Coiled-coil stretches lie at residues 903–957 (ASEE…QSEA) and 1233–1318 (MAAI…AARG). Positions 1345–1352 (EKRSGDID) match the Bipartite nuclear localization signal motif. 2 disordered regions span residues 1385-1404 (ATPG…TPQS) and 1414-1443 (GSVG…MYTA). The short motif at 1435-1442 (KKKLSMYT) is the Bipartite nuclear localization signal element.

Component of the nuclear pore complex (NPC). NPC constitutes the exclusive means of nucleocytoplasmic transport. NPCs allow the passive diffusion of ions and small molecules and the active, nuclear transport receptor-mediated bidirectional transport of macromolecules such as proteins, RNAs, ribonucleoparticles (RNPs), and ribosomal subunits across the nuclear envelope. Due to its 8-fold rotational symmetry, all subunits are present with 8 copies or multiples thereof.

The protein resides in the nucleus. Its subcellular location is the nuclear pore complex. It localises to the nucleus membrane. Functions as a component of the nuclear pore complex (NPC). NPC components, collectively referred to as nucleoporins (NUPs), can play the role of both NPC structural components and of docking or interaction partners for transiently associated nuclear transport factors. Active directional transport is assured by both, a Phe-Gly (FG) repeat affinity gradient for these transport factors across the NPC and a transport cofactor concentration gradient across the nuclear envelope (GSP1 and GSP2 GTPases associated predominantly with GTP in the nucleus, with GDP in the cytoplasm). NUP159 plays an important role in several nuclear export pathways including poly(A)+ RNA, pre-ribosome, and protein export. The protein is Nucleoporin NUP159 (NUP159) of Chaetomium thermophilum (strain DSM 1495 / CBS 144.50 / IMI 039719) (Thermochaetoides thermophila).